The sequence spans 245 residues: 1-(5-phosphoribosyl)-5-[(5-phosphoribosylamino)methylideneamino] imidazole-4-carboxamide isomerase (245 aa).

The Proton acceptor role is filled by Asp7. Asp129 functions as the Proton donor in the catalytic mechanism.

This sequence belongs to the HisA/HisF family.

It is found in the cytoplasm. The enzyme catalyses 1-(5-phospho-beta-D-ribosyl)-5-[(5-phospho-beta-D-ribosylamino)methylideneamino]imidazole-4-carboxamide = 5-[(5-phospho-1-deoxy-D-ribulos-1-ylimino)methylamino]-1-(5-phospho-beta-D-ribosyl)imidazole-4-carboxamide. It functions in the pathway amino-acid biosynthesis; L-histidine biosynthesis; L-histidine from 5-phospho-alpha-D-ribose 1-diphosphate: step 4/9. This chain is 1-(5-phosphoribosyl)-5-[(5-phosphoribosylamino)methylideneamino] imidazole-4-carboxamide isomerase, found in Salmonella heidelberg (strain SL476).